The chain runs to 119 residues: MKKIKEAEQRKLRRKKRIKDKIGRGVASRPRITVFKSNRYFYAQVIDDSKGHTIASISTIEKSLNLGKNIDDVKKLGEVLAKRLKEKNINNLIFDRNGYKYHGLIASFATSLREFGINI.

The segment covering 1–10 has biased composition (basic and acidic residues); that stretch reads MKKIKEAEQR. The segment at 1-20 is disordered; it reads MKKIKEAEQRKLRRKKRIKD.

It belongs to the universal ribosomal protein uL18 family. As to quaternary structure, part of the 50S ribosomal subunit; part of the 5S rRNA/L5/L18/L25 subcomplex. Contacts the 5S and 23S rRNAs.

Functionally, this is one of the proteins that bind and probably mediate the attachment of the 5S RNA into the large ribosomal subunit, where it forms part of the central protuberance. The polypeptide is Large ribosomal subunit protein uL18 (Borreliella burgdorferi (strain ATCC 35210 / DSM 4680 / CIP 102532 / B31) (Borrelia burgdorferi)).